The chain runs to 177 residues: DELTA-stichotoxin-Hcr4b (177 aa).

Residues 3 to 12 (ALAGTITLGA) form a plays an important role in the hemolytic activity region. The segment at 11–30 (GASLGFQILDKVLGELGKVS) is N-terminal region. The phosphocholine site is built by Ser54, Val87, Ser105, Pro107, Tyr133, Tyr137, and Tyr138. Positions 105–120 (SVPFDYNLYSNWWDVK) are trp-rich region, which is important for the binding to lipid membrane.

This sequence belongs to the actinoporin family. Sea anemone subfamily. In terms of assembly, octamer or nonamer in membranes. Monomer in the soluble state.

The protein resides in the secreted. The protein localises to the nematocyst. Its subcellular location is the target cell membrane. Its function is as follows. Pore-forming protein that forms cations-selective hydrophilic pores of around 1 nm and causes cardiac stimulation and cytolysis. Pore formation is a multi-step process that involves specific recognition of membrane sphingomyelin (but neither cholesterol nor phosphatidylcholine) using aromatic rich region and adjacent phosphocholine (POC) binding site, firm binding to the membrane (mainly driven by hydrophobic interactions) accompanied by the transfer of the N-terminal region to the lipid-water interface and finally pore formation after oligomerization of monomers. Cytolytic effects include red blood cells hemolysis, platelet aggregation and lysis, cytotoxic and cytostatic effects on fibroblasts. Lethality in mammals has been ascribed to severe vasospasm of coronary vessels, cardiac arrhythmia, and inotropic effects. Preincubation with exogenous sphingomyeline causes complete loss of hemolytic activity. The protein is DELTA-stichotoxin-Hcr4b of Radianthus crispa (Leathery sea anemone).